A 277-amino-acid polypeptide reads, in one-letter code: Caspase-3 (277 aa).

N-acetylmethionine is present on M1. 2 propeptides span residues 1–9 (MENTENSVD) and 10–28 (AKSF…KSMD). K11 bears the N6-acetyllysine mark. S26 carries the post-translational modification Phosphoserine. Catalysis depends on residues H121 and C163. C163 is subject to S-nitrosocysteine; in inhibited form.

Belongs to the peptidase C14A family. In terms of assembly, heterotetramer that consists of two anti-parallel arranged heterodimers, each one formed by a 17 kDa (p17) and a 12 kDa (p12) subunit. Interacts with BIRC6/bruce. In terms of processing, cleavage by granzyme B, caspase-6, caspase-8 and caspase-10 generates the two active subunits. Additional processing of the propeptides is likely due to the autocatalytic activity of the activated protease. Active heterodimers between the small subunit of caspase-7 protease and the large subunit of caspase-3 also occur and vice versa. Post-translationally, S-nitrosylated on its catalytic site cysteine in unstimulated cell lines and denitrosylated upon activation of the Fas apoptotic pathway, associated with an increase in intracellular caspase activity. Fas therefore activates caspase-3 not only by inducing the cleavage of the caspase zymogen to its active subunits, but also by stimulating the denitrosylation of its active site thiol. Ubiquitinated by BIRC6; this activity is inhibited by DIABLO/SMAC.

It localises to the cytoplasm. The catalysed reaction is Strict requirement for an Asp residue at positions P1 and P4. It has a preferred cleavage sequence of Asp-Xaa-Xaa-Asp-|- with a hydrophobic amino-acid residue at P2 and a hydrophilic amino-acid residue at P3, although Val or Ala are also accepted at this position.. With respect to regulation, inhibited by BIRC6; following inhibition of BIRC6-caspase binding by DIABLO/SMAC, BIRC6 is subjected to caspase cleavage, leading to an increase in active caspases. Its function is as follows. Involved in the activation cascade of caspases responsible for apoptosis execution. At the onset of apoptosis, it proteolytically cleaves poly(ADP-ribose) polymerase PARP1 at a '216-Asp-|-Gly-217' bond. Cleaves and activates sterol regulatory element binding proteins (SREBPs) between the basic helix-loop-helix leucine zipper domain and the membrane attachment domain. Cleaves and activates caspase-6, -7 and -9 (CASP6, CASP7 and CASP9, respectively). Cleaves and inactivates interleukin-18 (IL18). Triggers cell adhesion in sympathetic neurons through RET cleavage. Cleaves IL-1 beta between an Asp and an Ala, releasing the mature cytokine which is involved in a variety of inflammatory processes. Cleaves and inhibits serine/threonine-protein kinase AKT1 in response to oxidative stress. Acts as an inhibitor of type I interferon production during virus-induced apoptosis by mediating cleavage of antiviral proteins CGAS, IRF3 and MAVS, thereby preventing cytokine overproduction. Also involved in pyroptosis by mediating cleavage and activation of gasdermin-E (GSDME). Cleaves XRCC4 and phospholipid scramblase proteins XKR4, XKR8 and XKR9, leading to promote phosphatidylserine exposure on apoptotic cell surface. Cleaves BIRC6 following inhibition of BIRC6-caspase binding by DIABLO/SMAC. This is Caspase-3 (CASP3) from Canis lupus familiaris (Dog).